Reading from the N-terminus, the 88-residue chain is Arminin 7965 (88 aa).

Positions 1 to 18 (MKTVFAILFLTFIAFTYA) are cleaved as a signal peptide. Positions 19 to 57 (KSYEDVKEEIKNEVEREIFEDLEEESDVLDSNVRELNDA) are excised as a propeptide. Alanine amide is present on A85.

This sequence belongs to the arminin family. As to expression, expressed in entodermal epithelium along the body column.

It localises to the secreted. Its subcellular location is the target cell membrane. In terms of biological role, antimicrobial peptide with a broad-spectrum antimicrobial activity. Keeps its antibacterial activity under a wide range of salt concentrations that mimic physiological conditions of human blood, which is surprising, since Hydra is an obligate freshwater animal with nearly no salt tolerance. Does not affect red blood cells. The polypeptide is Arminin 7965 (Hydra vulgaris (Hydra)).